A 277-amino-acid chain; its full sequence is Shikimate dehydrogenase (NADP(+)) (277 aa).

Residues 15 to 17 (SLS) and Thr-62 contribute to the shikimate site. Lys-66 serves as the catalytic Proton acceptor. Shikimate-binding residues include Asn-87 and Asp-102. NADP(+)-binding positions include 127–131 (GAGGA), 151–156 (NRTVDK), and Ile-219. Tyr-221 is a binding site for shikimate. Residue Gly-242 participates in NADP(+) binding.

The protein belongs to the shikimate dehydrogenase family. Homodimer.

The catalysed reaction is shikimate + NADP(+) = 3-dehydroshikimate + NADPH + H(+). Its pathway is metabolic intermediate biosynthesis; chorismate biosynthesis; chorismate from D-erythrose 4-phosphate and phosphoenolpyruvate: step 4/7. Involved in the biosynthesis of the chorismate, which leads to the biosynthesis of aromatic amino acids. Catalyzes the reversible NADPH linked reduction of 3-dehydroshikimate (DHSA) to yield shikimate (SA). This chain is Shikimate dehydrogenase (NADP(+)), found in Bacillus anthracis (strain CDC 684 / NRRL 3495).